Reading from the N-terminus, the 441-residue chain is MHPSDQTIFALATGPLPSAIAIVRVSGSRAGEVLTALTGSLPPPRRAVRCDLRSRDGDLIDDGVALWFPTPASATGEDVAELHIHGSRAVAAALIKTLSAFEGVRPAEPGEFTRRGFENGKLDLTEAEGLDDLIHADTDAQRRQALRQLGGVLGDRARRWRDQIIEALALVEAGIDFSDEGDVADELMGPARAKIAELSAEIAEVLAEQGRGEKLRDGMVVAIAGPPNVGKSTLINRLARREVAIVSPHAGTTRDVIEIQLDLDGYPVTVIDTAGLRDSDDPVEQEGVRRARSRAAAADLVLWLSTATDASDPDVKGPEVWRVRNKIDLATGEVAESGPSQPVFRISAATGEGFADLLRELTRFAAQYFGSAEAGLITRDRHRRLLADAAASLTRSLVPGLAEEIVAEELRASAHSLGRLLGRVDVEDVLGEIFGRFCIGK.

3 residues coordinate (6S)-5-formyl-5,6,7,8-tetrahydrofolate: Arg-24, Glu-81, and Lys-121. The TrmE-type G domain maps to 218–366 (GMVVAIAGPP…LLRELTRFAA (149 aa)). GTP contacts are provided by residues 228–233 (NVGKST), 247–253 (SPHAGTT), and 272–275 (DTAG). Mg(2+) is bound by residues Ser-232 and Thr-253. Residue Lys-441 coordinates (6S)-5-formyl-5,6,7,8-tetrahydrofolate.

The protein belongs to the TRAFAC class TrmE-Era-EngA-EngB-Septin-like GTPase superfamily. TrmE GTPase family. In terms of assembly, homodimer. Heterotetramer of two MnmE and two MnmG subunits. K(+) is required as a cofactor.

It localises to the cytoplasm. Its function is as follows. Exhibits a very high intrinsic GTPase hydrolysis rate. Involved in the addition of a carboxymethylaminomethyl (cmnm) group at the wobble position (U34) of certain tRNAs, forming tRNA-cmnm(5)s(2)U34. This chain is tRNA modification GTPase MnmE, found in Rhodopseudomonas palustris (strain ATCC BAA-98 / CGA009).